Reading from the N-terminus, the 207-residue chain is Crossover junction endodeoxyribonuclease RuvC (207 aa).

Catalysis depends on residues Asp-11, Glu-71, and Asp-143. Residues Asp-11, Glu-71, and Asp-143 each coordinate Mg(2+).

This sequence belongs to the RuvC family. In terms of assembly, homodimer which binds Holliday junction (HJ) DNA. The HJ becomes 2-fold symmetrical on binding to RuvC with unstacked arms; it has a different conformation from HJ DNA in complex with RuvA. In the full resolvosome a probable DNA-RuvA(4)-RuvB(12)-RuvC(2) complex forms which resolves the HJ. The cofactor is Mg(2+).

Its subcellular location is the cytoplasm. The enzyme catalyses Endonucleolytic cleavage at a junction such as a reciprocal single-stranded crossover between two homologous DNA duplexes (Holliday junction).. The RuvA-RuvB-RuvC complex processes Holliday junction (HJ) DNA during genetic recombination and DNA repair. Endonuclease that resolves HJ intermediates. Cleaves cruciform DNA by making single-stranded nicks across the HJ at symmetrical positions within the homologous arms, yielding a 5'-phosphate and a 3'-hydroxyl group; requires a central core of homology in the junction. The consensus cleavage sequence is 5'-(A/T)TT(C/G)-3'. Cleavage occurs on the 3'-side of the TT dinucleotide at the point of strand exchange. HJ branch migration catalyzed by RuvA-RuvB allows RuvC to scan DNA until it finds its consensus sequence, where it cleaves and resolves the cruciform DNA. The polypeptide is Crossover junction endodeoxyribonuclease RuvC (Methylobacterium radiotolerans (strain ATCC 27329 / DSM 1819 / JCM 2831 / NBRC 15690 / NCIMB 10815 / 0-1)).